We begin with the raw amino-acid sequence, 103 residues long: Histone H4 type VIII (103 aa).

Over residues 1-14 the composition is skewed to gly residues; it reads MSGRGKGGKGLGKG. Positions 1 to 20 are disordered; sequence MSGRGKGGKGLGKGGAKRHR. Ser2 is subject to N-acetylserine. Ser2 carries the post-translational modification Phosphoserine. Arg4 is modified (asymmetric dimethylarginine; by PRMT1; alternate). Arg4 carries the post-translational modification Citrulline; alternate. The residue at position 4 (Arg4) is an Omega-N-methylarginine; by PRMT1; alternate. Residue Arg4 is modified to Symmetric dimethylarginine; by PRMT5 and PRMT7; alternate. An N6-(2-hydroxyisobutyryl)lysine; alternate mark is found at Lys6, Lys9, Lys13, and Lys17. N6-acetyl-N6-methyllysine; alternate is present on Lys6. N6-acetyllysine is present on residues Lys6, Lys9, Lys13, and Lys17. N6-butyryllysine; alternate is present on residues Lys6, Lys9, Lys13, and Lys17. N6-glutaryllysine; alternate is present on Lys6. N6-lactoyllysine; alternate is present on residues Lys6, Lys9, Lys13, and Lys17. An N6-propionyllysine; alternate modification is found at Lys9. Lys13 is modified (N6-acetyl-N6-methyllysine; alternate). Lys13 bears the N6-glutaryllysine; alternate mark. Lys13 is subject to N6-methyllysine; alternate. Lys17 bears the N6-propionyllysine; alternate mark. Lys21 carries the N6-methyllysine; alternate modification. The residue at position 21 (Lys21) is an N6,N6,N6-trimethyllysine; alternate. Lys21 is subject to N6,N6-dimethyllysine; alternate. An N6-(2-hydroxyisobutyryl)lysine; alternate mark is found at Lys32 and Lys45. N6-acetyllysine is present on Lys32. 2 positions are modified to N6-butyryllysine; alternate: Lys32 and Lys45. The residue at position 32 (Lys32) is an N6-glutaryllysine; alternate. Lys32 is subject to N6-lactoyllysine; alternate. N6-propionyllysine; alternate occurs at positions 32 and 45. Lys32 bears the N6-succinyllysine; alternate mark. Lys32 is covalently cross-linked (Glycyl lysine isopeptide (Lys-Gly) (interchain with G-Cter in UFM1); alternate). Ser48 is modified (phosphoserine). The residue at position 52 (Tyr52) is a Phosphotyrosine. Position 60 is an N6-acetyllysine (Lys60). 3 positions are modified to N6-glutaryllysine; alternate: Lys60, Lys78, and Lys80. The residue at position 60 (Lys60) is an N6-(2-hydroxyisobutyryl)lysine. 2 positions are modified to N6-(2-hydroxyisobutyryl)lysine; alternate: Lys78 and Lys80. 2 positions are modified to N6-butyryllysine; alternate: Lys78 and Lys80. The residue at position 78 (Lys78) is an N6-lactoyllysine; alternate. N6-propionyllysine; alternate is present on residues Lys78 and Lys80. The residue at position 78 (Lys78) is an N6-succinyllysine. Lys80 bears the N6-acetyllysine mark. Position 89 is a phosphotyrosine (Tyr89). At Lys92 the chain carries N6-(2-hydroxyisobutyryl)lysine; alternate. Position 92 is an N6-butyryllysine; alternate (Lys92). Lys92 is modified (N6-glutaryllysine; alternate). Position 92 is an N6-lactoyllysine; alternate (Lys92). Lys92 carries the N6-propionyllysine; alternate modification. An N6-succinyllysine; alternate modification is found at Lys92. Position 92 is an N6-acetyllysine; alternate (Lys92). Lys92 is covalently cross-linked (Glycyl lysine isopeptide (Lys-Gly) (interchain with G-Cter in ubiquitin); alternate).

This sequence belongs to the histone H4 family. As to quaternary structure, the nucleosome is a histone octamer containing two molecules each of H2A, H2B, H3 and H4 assembled in one H3-H4 heterotetramer and two H2A-H2B heterodimers. The octamer wraps approximately 147 bp of DNA. In terms of processing, acetylation at Lys-6 (H4K5ac), Lys-9 (H4K8ac), Lys-13 (H4K12ac) and Lys-17 (H4K16ac) occurs in coding regions of the genome but not in heterochromatin. Post-translationally, citrullination at Arg-4 (H4R3ci) by PADI4 impairs methylation. Monomethylation and asymmetric dimethylation at Arg-4 (H4R3me1 and H4R3me2a, respectively) by PRMT1 favors acetylation at Lys-9 (H4K8ac) and Lys-13 (H4K12ac). Demethylation is performed by JMJD6. Symmetric dimethylation on Arg-4 (H4R3me2s) by the PRDM1/PRMT5 complex may play a crucial role in the germ-cell lineage. In terms of processing, monomethylated, dimethylated or trimethylated at Lys-21 (H4K20me1, H4K20me2, H4K20me3). Monomethylation is performed by KMT5A/SET8. Trimethylation is performed by KMT5B and KMT5C and induces gene silencing. Monomethylated at Lys-13 (H4K12me1) by N6AMT1; H4K12me1 modification is present at the promoters of numerous genes encoding cell cycle regulators. Post-translationally, acetyl-methylated at Lys-6 and Lys-13 (H4K5acme and H4K12acme, respectively), acetyl-methylation is an epigenetic mark of active chromatin associated with increased transcriptional initiation. Acetyl-methylation is formed by acetylation by EP300/p300 of lysine residues that are already monomethylated on the same side chain. H4K5acme and H4K12acme marks specifically bind BRD2. Ubiquitinated by the CUL4-DDB-RBX1 complex in response to ultraviolet irradiation. This may weaken the interaction between histones and DNA and facilitate DNA accessibility to repair proteins. Monoubiquitinated at Lys-92 of histone H4 (H4K91ub1) in response to DNA damage. The exact role of H4K91ub1 in DNA damage response is still unclear but it may function as a licensing signal for additional histone H4 post-translational modifications such as H4 Lys-21 methylation (H4K20me). In terms of processing, sumoylated, which is associated with transcriptional repression. Post-translationally, butyrylation of histones marks active promoters and competes with histone acetylation. Glutarylation at Lys-92 (H4K91glu) destabilizes nucleosomes by promoting dissociation of the H2A-H2B dimers from nucleosomes. In terms of processing, ufmylated; monofmylated by UFL1 at Lys-32 (H4K31Ufm1) in response to DNA damage. Post-translationally, lactylated in macrophages by EP300/P300 by using lactoyl-CoA directly derived from endogenous or exogenous lactate, leading to stimulates gene transcription. Delactylated by SIRT3 at Lys-17 (H4K16la).

It is found in the nucleus. It localises to the chromosome. Functionally, core component of nucleosome. Nucleosomes wrap and compact DNA into chromatin, limiting DNA accessibility to the cellular machineries which require DNA as a template. Histones thereby play a central role in transcription regulation, DNA repair, DNA replication and chromosomal stability. DNA accessibility is regulated via a complex set of post-translational modifications of histones, also called histone code, and nucleosome remodeling. In Gallus gallus (Chicken), this protein is Histone H4 type VIII (H4-VIII).